A 305-amino-acid chain; its full sequence is Putative lipid kinase USA300HOU_0749 (305 aa).

Positions 3–139 constitute a DAGKc domain; the sequence is NKYTHGVLFY…YDVIKINNQY (137 aa). ATP-binding positions include Ser-44, 74-80, and Thr-101; that span reads GDGTVNE. Mg(2+) contacts are provided by Ser-220, Asp-223, and Glu-225. Residue Glu-281 is the Proton acceptor of the active site.

The protein belongs to the diacylglycerol/lipid kinase family. Requires Mg(2+) as cofactor.

May catalyze the ATP-dependent phosphorylation of lipids other than diacylglycerol (DAG). This chain is Putative lipid kinase USA300HOU_0749, found in Staphylococcus aureus (strain USA300 / TCH1516).